Reading from the N-terminus, the 428-residue chain is Enolase (428 aa).

Residue Gln-163 coordinates (2R)-2-phosphoglycerate. Residue Glu-205 is the Proton donor of the active site. The Mg(2+) site is built by Asp-242, Glu-286, and Asp-313. Residues Lys-338, Arg-367, Ser-368, and Lys-389 each coordinate (2R)-2-phosphoglycerate. Catalysis depends on Lys-338, which acts as the Proton acceptor.

The protein belongs to the enolase family. The cofactor is Mg(2+).

It is found in the cytoplasm. The protein resides in the secreted. It localises to the cell surface. The enzyme catalyses (2R)-2-phosphoglycerate = phosphoenolpyruvate + H2O. The protein operates within carbohydrate degradation; glycolysis; pyruvate from D-glyceraldehyde 3-phosphate: step 4/5. Its function is as follows. Catalyzes the reversible conversion of 2-phosphoglycerate (2-PG) into phosphoenolpyruvate (PEP). It is essential for the degradation of carbohydrates via glycolysis. This is Enolase from Bordetella petrii (strain ATCC BAA-461 / DSM 12804 / CCUG 43448).